A 156-amino-acid polypeptide reads, in one-letter code: Transcriptional repressor NrdR (156 aa).

Residues 3–34 (CPYCGETEDKVIDSRQGKEADVIRRRRECLSC) fold into a zinc finger. The 91-residue stretch at 49–139 (LVIIKKDGRR…VYREFKHVND (91 aa)) folds into the ATP-cone domain.

Belongs to the NrdR family. Requires Zn(2+) as cofactor.

Functionally, negatively regulates transcription of bacterial ribonucleotide reductase nrd genes and operons by binding to NrdR-boxes. The sequence is that of Transcriptional repressor NrdR from Desulfatibacillum aliphaticivorans.